A 357-amino-acid polypeptide reads, in one-letter code: Hyaluronidase (357 aa).

The signal sequence occupies residues 1-26 (MLLVTLFLFFLQALVNGDSCGSNCEK). 2 cysteine pairs are disulfide-bonded: Cys-45/Cys-334 and Cys-211/Cys-223. Asn-105 and Asn-125 each carry an N-linked (GlcNAc...) asparagine glycan. Glu-135 (proton donor) is an active-site residue. N-linked (GlcNAc...) asparagine glycosylation is present at Asn-153. Asn-351 carries N-linked (GlcNAc...) asparagine glycosylation.

This sequence belongs to the glycosyl hydrolase 56 family.

It is found in the secreted. The catalysed reaction is Random hydrolysis of (1-&gt;4)-linkages between N-acetyl-beta-D-glucosamine and D-glucuronate residues in hyaluronate.. Hydrolyzes high molecular weight hyaluronic acid to produce small oligosaccharides. In Vespa magnifica (Hornet), this protein is Hyaluronidase.